A 179-amino-acid chain; its full sequence is Large ribosomal subunit protein uL10 (179 aa).

The protein belongs to the universal ribosomal protein uL10 family. Part of the ribosomal stalk of the 50S ribosomal subunit. The N-terminus interacts with L11 and the large rRNA to form the base of the stalk. The C-terminus forms an elongated spine to which L12 dimers bind in a sequential fashion forming a multimeric L10(L12)X complex.

Forms part of the ribosomal stalk, playing a central role in the interaction of the ribosome with GTP-bound translation factors. This chain is Large ribosomal subunit protein uL10, found in Mycolicibacterium vanbaalenii (strain DSM 7251 / JCM 13017 / BCRC 16820 / KCTC 9966 / NRRL B-24157 / PYR-1) (Mycobacterium vanbaalenii).